We begin with the raw amino-acid sequence, 362 residues long: Cap-specific mRNA (nucleoside-2'-O-)-methyltransferase 1 (362 aa).

In terms of domain architecture, RrmJ-type SAM-dependent 2'-O-MTase spans 87–294 (SFGNRAGHKL…ERYLVCLGFL (208 aa)). Residues Gly-130 and Asp-207 each contribute to the S-adenosyl-L-methionine site. Catalysis depends on Lys-248, which acts as the Proton acceptor.

The protein localises to the nucleus. The catalysed reaction is a 5'-end (N(7)-methyl 5'-triphosphoguanosine)-ribonucleoside in mRNA + S-adenosyl-L-methionine = a 5'-end (N(7)-methyl 5'-triphosphoguanosine)-(2'-O-methyl-ribonucleoside) in mRNA + S-adenosyl-L-homocysteine + H(+). Its function is as follows. S-adenosyl-L-methionine-dependent methyltransferase that mediates RNA cap1 2'-O-ribose methylation to the 5'-cap structure of spliced leader and U1 small nuclear RNAs. Methylates the ribose of the first nucleotide of a m(7)GpppG-capped RNA to produce m(7)GpppNmp (cap1). Cap1 modification is linked to higher levels of translation. Recognizes a guanosine cap on RNA independent of its N(7) methylation status. The sequence is that of Cap-specific mRNA (nucleoside-2'-O-)-methyltransferase 1 from Trypanosoma cruzi (strain CL Brener).